The primary structure comprises 95 residues: Small ribosomal subunit protein bS18 (95 aa).

The protein belongs to the bacterial ribosomal protein bS18 family. In terms of assembly, part of the 30S ribosomal subunit. Forms a tight heterodimer with protein bS6.

In terms of biological role, binds as a heterodimer with protein bS6 to the central domain of the 16S rRNA, where it helps stabilize the platform of the 30S subunit. This is Small ribosomal subunit protein bS18 from Ehrlichia canis (strain Jake).